The primary structure comprises 446 residues: NADH oxidase (446 aa).

FAD contacts are provided by residues 7–11 (GCTHA), glutamate 32, cysteine 42, valine 79, 110–113 (TTGS), lysine 132, and tyrosine 157. Catalysis depends on histidine 10, which acts as the Proton acceptor. Cysteine 42 (redox-active) is an active-site residue. A Cysteine sulfinic acid (-SO2H) modification is found at cysteine 42. NAD(+)-binding positions include 150-165 (VVVV…LVEA), aspartate 177, tyrosine 186, and glycine 243. Residues 271–281 (TSNPDIFAAGD), leucine 298, alanine 299, and threonine 300 contribute to the FAD site. Glycine 328 is a binding site for NAD(+). FAD is bound at residue phenylalanine 424.

Belongs to the class-III pyridine nucleotide-disulfide oxidoreductase family. In terms of assembly, homodimer. Requires FAD as cofactor. In terms of processing, the N-terminus is blocked.

The catalysed reaction is 2 NADH + O2 + 2 H(+) = 2 NAD(+) + 2 H2O. Catalyzes the four-electron reduction of molecular oxygen to water. In Enterococcus faecalis (strain ATCC 700802 / V583), this protein is NADH oxidase (nox).